Reading from the N-terminus, the 200-residue chain is Inner membrane protein E199L (200 aa).

The N-linked (GlcNAc...) asparagine; by host glycan is linked to N131. The helical transmembrane segment at 150 to 170 (INVMNHPFLTLILIILILIII) threads the bilayer.

Belongs to the asfivirus E199L family. In terms of assembly, interacts with host PYCR2; this interaction results in autophagy activation. Post-translationally, contains intramolecular disulfide bonds.

It localises to the virion membrane. The protein localises to the host membrane. Its function is as follows. Essential for viral fusion with host endosomal membrane and core release. Not required for virus morphogenesis and egress. Induces complete autophagy through the interaction with and down-regulation of host PYCR2. The protein is Inner membrane protein E199L of Ornithodoros (relapsing fever ticks).